The sequence spans 143 residues: Ribosome maturation factor RimP (143 aa).

This sequence belongs to the RimP family.

The protein localises to the cytoplasm. Required for maturation of 30S ribosomal subunits. This chain is Ribosome maturation factor RimP, found in Neisseria gonorrhoeae (strain ATCC 700825 / FA 1090).